Reading from the N-terminus, the 140-residue chain is Natriuretic peptides B (140 aa).

A signal peptide spans 1–26; the sequence is MEPCAALPRALLLLLFLHLSPLGGRP. The disordered stretch occupies residues 71-94; sequence LEPLHRSHSPAEAPEAGGTPRGVL. A disulfide bridge links C118 with C134.

This sequence belongs to the natriuretic peptide family. Post-translationally, the precursor molecule is proteolytically cleaved by the endoproteases FURIN or CORIN at Arg-108 to produce the brain natriuretic peptide 32. CORIN also cleaves the precursor molecule at additional residues including Arg-105, Arg-108 and possibly Lys-111. Undergoes further proteolytic cleavage by various proteases such as DPP4, MME and possibly FAP, to give rise to a variety of shorter peptides. Cleaved at Pro-110 by the prolyl endopeptidase FAP (seprase) activity (in vitro). Degraded by IDE. During IDE degradation, the resulting products initially increase the activation of NPR1 and can also stimulate NPR2 to produce cGMP before the fragments are completely degraded and inactivated by IDE (in vitro). In terms of tissue distribution, brain and also in atria, but at much lower levels than ANP.

It is found in the secreted. Cardiac hormone that plays a key role in mediating cardio-renal homeostasis. May also function as a paracrine antifibrotic factor in the heart. Acts by specifically binding and stimulating NPR1 to produce cGMP, which in turn activates effector proteins that drive various biological responses. Involved in regulating the extracellular fluid volume and maintaining the fluid-electrolyte balance through natriuresis, diuresis, vasorelaxation, and inhibition of renin and aldosterone secretion. Binds the clearance receptor NPR3. Its function is as follows. May affect cardio-renal homeostasis. Able to promote the production of cGMP although its potency is very low compared to brain natriuretic peptide 32. This is Natriuretic peptides B (NPPB) from Canis lupus familiaris (Dog).